We begin with the raw amino-acid sequence, 110 residues long: Cytochrome c (110 aa).

Residues cysteine 21, cysteine 24, histidine 25, and methionine 87 each contribute to the heme c site.

Belongs to the cytochrome c family. Binds 1 heme c group covalently per subunit.

The protein localises to the mitochondrion intermembrane space. Its function is as follows. Electron carrier protein. The oxidized form of the cytochrome c heme group can accept an electron from the heme group of the cytochrome c1 subunit of cytochrome reductase. Cytochrome c then transfers this electron to the cytochrome oxidase complex, the final protein carrier in the mitochondrial electron-transport chain. This Kluyveromyces lactis (strain ATCC 8585 / CBS 2359 / DSM 70799 / NBRC 1267 / NRRL Y-1140 / WM37) (Yeast) protein is Cytochrome c (CYCK).